Reading from the N-terminus, the 346-residue chain is Ribulose-5-phosphate reductase (346 aa).

Residues cysteine 45, histidine 71, glutamate 72, and glutamate 151 each coordinate Zn(2+).

This sequence belongs to the zinc-containing alcohol dehydrogenase family. It depends on Zn(2+) as a cofactor.

The catalysed reaction is D-ribitol 5-phosphate + NADP(+) = D-ribulose 5-phosphate + NADPH + H(+). It functions in the pathway cell wall biogenesis; poly(ribitol phosphate) teichoic acid biosynthesis. Catalyzes the NADPH dependent reduction of D-ribulose 5-phosphate to D-ribitol 5-phosphate. This chain is Ribulose-5-phosphate reductase, found in Streptococcus pneumoniae (strain ATCC BAA-255 / R6).